Reading from the N-terminus, the 108-residue chain is Protein YcgL (108 aa).

Residues 12-96 form the YcgL domain; that stretch reads MFCVIYRSSK…PPEDLLKQHL (85 aa).

The protein is Protein YcgL of Shigella sonnei (strain Ss046).